A 59-amino-acid polypeptide reads, in one-letter code: Large ribosomal subunit protein bL32 (59 aa).

A disordered region spans residues 1–34 (MAVQKSKVTRSRRGQRRSHDALTGPTLSVDKTTG). Residues 7–16 (KVTRSRRGQR) show a composition bias toward basic residues.

Belongs to the bacterial ribosomal protein bL32 family.

This is Large ribosomal subunit protein bL32 from Marinomonas sp. (strain MWYL1).